The following is a 794-amino-acid chain: 6-hydroxypseudooxynicotine dehydrogenase complex subunit gamma (794 aa).

As to quaternary structure, heterohexamer of 2 alpha (kdhA), 2 beta (kdhB) and 2 gamma (kdhC) subunit. Dimer of heterotrimers. Mo-molybdopterin cytosine dinucleotide is required as a cofactor.

It catalyses the reaction 6-hydroxypseudooxynicotine + A + H2O = 2,6-dihydroxypseudooxynicotine + AH2. The protein operates within alkaloid degradation; nicotine degradation. In terms of biological role, molybdo-flavoprotein enzyme complex involved in nicotine degradation. The subunit gamma (large subunit) contains the substrate-binding sites, the subunit alpha (medium subunit) binds FAD and the subunit beta (small subunit) has a 2Fe-2S ferredoxin-type domain which binds 2 2Fe-2S clusters. The polypeptide is 6-hydroxypseudooxynicotine dehydrogenase complex subunit gamma (kdhC) (Paenarthrobacter nicotinovorans (Arthrobacter nicotinovorans)).